We begin with the raw amino-acid sequence, 101 residues long: Small ribosomal subunit protein uS14 (101 aa).

It belongs to the universal ribosomal protein uS14 family. In terms of assembly, part of the 30S ribosomal subunit. Contacts proteins S3 and S10.

Functionally, binds 16S rRNA, required for the assembly of 30S particles and may also be responsible for determining the conformation of the 16S rRNA at the A site. The polypeptide is Small ribosomal subunit protein uS14 (Aeromonas hydrophila subsp. hydrophila (strain ATCC 7966 / DSM 30187 / BCRC 13018 / CCUG 14551 / JCM 1027 / KCTC 2358 / NCIMB 9240 / NCTC 8049)).